A 193-amino-acid polypeptide reads, in one-letter code: MSALRLIVGLGNPGPEHAQTRHNAGFRFVDALIERSGARWALDSKLFGETAKVEVAGQPVWLLKPATFMNLSGKSITAALRFWKIEPEHLLVAHDELDLAPGTARLKFDGGHGGQNGLRDTIRLLGHGKFHRLRVGIGHPGHKDRVVPWVLGRAGREDDAAIGAAVDAAIDVLPLAMEGNFNEAMKRLHTEKK.

His-17 is a tRNA binding site. The Proton acceptor role is filled by His-22. Positions 68, 70, and 116 each coordinate tRNA.

It belongs to the PTH family. In terms of assembly, monomer.

The protein localises to the cytoplasm. The catalysed reaction is an N-acyl-L-alpha-aminoacyl-tRNA + H2O = an N-acyl-L-amino acid + a tRNA + H(+). Its function is as follows. Hydrolyzes ribosome-free peptidyl-tRNAs (with 1 or more amino acids incorporated), which drop off the ribosome during protein synthesis, or as a result of ribosome stalling. Catalyzes the release of premature peptidyl moieties from peptidyl-tRNA molecules trapped in stalled 50S ribosomal subunits, and thus maintains levels of free tRNAs and 50S ribosomes. The chain is Peptidyl-tRNA hydrolase from Xanthomonas euvesicatoria pv. vesicatoria (strain 85-10) (Xanthomonas campestris pv. vesicatoria).